A 639-amino-acid chain; its full sequence is tRNA (uracil(54)-C(5))-methyltransferase (639 aa).

Positions 78 to 113 are disordered; sequence VPPTMKHTVDNKRLSSPLTDSGNRRTKKPKLRKYKA. Residues Ser-92 and Ser-93 each carry the phosphoserine modification. Basic residues predominate over residues 101–113; it reads RRTKKPKLRKYKA. Residues 163-228 enclose the TRAM domain; sequence LQYHREVKNV…PYYVESDLLD (66 aa). 4 residues coordinate S-adenosyl-L-methionine: Gln-461, Tyr-496, Glu-517, and Asp-564. Residue Cys-591 is the Nucleophile of the active site. Glu-631 (proton acceptor) is an active-site residue.

It belongs to the class I-like SAM-binding methyltransferase superfamily. RNA M5U methyltransferase family.

The enzyme catalyses uridine(54) in tRNA + S-adenosyl-L-methionine = 5-methyluridine(54) in tRNA + S-adenosyl-L-homocysteine + H(+). In terms of biological role, catalyzes the formation of 5-methyl-uridine at position 54 (m5U54) in all tRNA. May also have a role in tRNA stabilization or maturation. This chain is tRNA (uracil(54)-C(5))-methyltransferase (TRM2), found in Saccharomyces cerevisiae (strain ATCC 204508 / S288c) (Baker's yeast).